The primary structure comprises 120 residues: Seripauperin-2 (120 aa).

A helical transmembrane segment spans residues 7-24 (IAAGVAAIAATASATTTL).

Belongs to the SRP1/TIP1 family. Seripauperin subfamily.

The protein resides in the membrane. The chain is Seripauperin-2 (PAU2) from Saccharomyces cerevisiae (strain ATCC 204508 / S288c) (Baker's yeast).